Here is a 307-residue protein sequence, read N- to C-terminus: Acetyl-coenzyme A carboxylase carboxyl transferase subunit beta (307 aa).

A CoA carboxyltransferase N-terminal domain is found at 25–294 (VWTKCTSCEQ…PLVVPIEQPK (270 aa)). Zn(2+) is bound by residues Cys-29, Cys-32, Cys-48, and Cys-51. A C4-type zinc finger spans residues 29-51 (CTSCEQVLYHADLERNLEVCPKC).

Belongs to the AccD/PCCB family. In terms of assembly, acetyl-CoA carboxylase is a heterohexamer composed of biotin carboxyl carrier protein (AccB), biotin carboxylase (AccC) and two subunits each of ACCase subunit alpha (AccA) and ACCase subunit beta (AccD). It depends on Zn(2+) as a cofactor.

The protein resides in the cytoplasm. It catalyses the reaction N(6)-carboxybiotinyl-L-lysyl-[protein] + acetyl-CoA = N(6)-biotinyl-L-lysyl-[protein] + malonyl-CoA. It participates in lipid metabolism; malonyl-CoA biosynthesis; malonyl-CoA from acetyl-CoA: step 1/1. Its function is as follows. Component of the acetyl coenzyme A carboxylase (ACC) complex. Biotin carboxylase (BC) catalyzes the carboxylation of biotin on its carrier protein (BCCP) and then the CO(2) group is transferred by the transcarboxylase to acetyl-CoA to form malonyl-CoA. The chain is Acetyl-coenzyme A carboxylase carboxyl transferase subunit beta from Photobacterium profundum (strain SS9).